Reading from the N-terminus, the 570-residue chain is Proline--tRNA ligase (570 aa).

This sequence belongs to the class-II aminoacyl-tRNA synthetase family. ProS type 1 subfamily. Homodimer.

Its subcellular location is the cytoplasm. The catalysed reaction is tRNA(Pro) + L-proline + ATP = L-prolyl-tRNA(Pro) + AMP + diphosphate. In terms of biological role, catalyzes the attachment of proline to tRNA(Pro) in a two-step reaction: proline is first activated by ATP to form Pro-AMP and then transferred to the acceptor end of tRNA(Pro). As ProRS can inadvertently accommodate and process non-cognate amino acids such as alanine and cysteine, to avoid such errors it has two additional distinct editing activities against alanine. One activity is designated as 'pretransfer' editing and involves the tRNA(Pro)-independent hydrolysis of activated Ala-AMP. The other activity is designated 'posttransfer' editing and involves deacylation of mischarged Ala-tRNA(Pro). The misacylated Cys-tRNA(Pro) is not edited by ProRS. This chain is Proline--tRNA ligase, found in Geobacter metallireducens (strain ATCC 53774 / DSM 7210 / GS-15).